Here is a 423-residue protein sequence, read N- to C-terminus: Probable M18 family aminopeptidase 2 (423 aa).

H84, H157, and H397 together coordinate Zn(2+).

It belongs to the peptidase M18 family. Requires Zn(2+) as cofactor.

In Borreliella burgdorferi (strain ATCC 35210 / DSM 4680 / CIP 102532 / B31) (Borrelia burgdorferi), this protein is Probable M18 family aminopeptidase 2 (apeB).